The chain runs to 141 residues: D-aminoacyl-tRNA deacylase (141 aa).

The Gly-cisPro motif, important for rejection of L-amino acids motif lies at 133–134 (GP).

This sequence belongs to the DTD family. As to quaternary structure, homodimer.

It is found in the cytoplasm. It catalyses the reaction glycyl-tRNA(Ala) + H2O = tRNA(Ala) + glycine + H(+). The catalysed reaction is a D-aminoacyl-tRNA + H2O = a tRNA + a D-alpha-amino acid + H(+). Functionally, an aminoacyl-tRNA editing enzyme that deacylates mischarged D-aminoacyl-tRNAs. Also deacylates mischarged glycyl-tRNA(Ala), protecting cells against glycine mischarging by AlaRS. Acts via tRNA-based rather than protein-based catalysis; rejects L-amino acids rather than detecting D-amino acids in the active site. By recycling D-aminoacyl-tRNA to D-amino acids and free tRNA molecules, this enzyme counteracts the toxicity associated with the formation of D-aminoacyl-tRNA entities in vivo and helps enforce protein L-homochirality. This is D-aminoacyl-tRNA deacylase from Streptomyces coelicolor (strain ATCC BAA-471 / A3(2) / M145).